Reading from the N-terminus, the 185-residue chain is Neuronal vesicle trafficking-associated protein 1 (185 aa).

Residues 1–82 (MVKLGNNFAE…ITEGVTERFK (82 aa)) lie on the Cytoplasmic side of the membrane. A helical; Signal-anchor for type II membrane protein transmembrane segment spans residues 83–103 (VSVLVLFALAFLTCVVFLVVY). The Lumenal portion of the chain corresponds to 104–185 (KVYKYDRACP…QETEAAEKSA (82 aa)). Positions 129–164 (ESYYTEQDSSAREKFYTVINHYNLAKQSITRSVSPW) are required for GRIP1 interaction.

The protein belongs to the NSG family. As to quaternary structure, forms a complex with GRIP1, GRIA2 and STX12; controls the intracellular fate of AMPAR and the endosomal sorting of the GRIA2 subunit toward recycling and membrane targeting. Interacts with GRIP1. Interacts with STX12. Interacts with APP; could regulate APP processing. Interacts with FAM171A1. Widely expressed in brain and spinal cord. Expressed in neurons during maturation and synapse formation.

Its subcellular location is the membrane. The protein localises to the golgi apparatus. It is found in the trans-Golgi network membrane. It localises to the endosome membrane. The protein resides in the cell projection. Its subcellular location is the dendrite. The protein localises to the early endosome membrane. It is found in the late endosome membrane. It localises to the lysosome lumen. The protein resides in the recycling endosome membrane. Its subcellular location is the cytoplasmic vesicle membrane. The protein localises to the golgi stack membrane. It is found in the endosome. It localises to the multivesicular body membrane. The protein resides in the endoplasmic reticulum membrane. Functionally, plays a role in the recycling mechanism in neurons of multiple receptors, including AMPAR, APP and L1CAM and acts at the level of early endosomes to promote sorting of receptors toward a recycling pathway. Regulates sorting and recycling of GRIA2 through interaction with GRIP1 and then contributes to the regulation of synaptic transmission and plasticity by affecting the recycling and targeting of AMPA receptors to the synapse. Is required for faithful sorting of L1CAM to axons by facilitating trafficking from somatodendritic early endosome or the recycling endosome. In an other hand, induces apoptosis via the activation of CASP3 in response to DNA damage. In Rattus norvegicus (Rat), this protein is Neuronal vesicle trafficking-associated protein 1.